Here is a 463-residue protein sequence, read N- to C-terminus: Ammonium transporter 1 (463 aa).

Residues 1–39 (MVAGEIIKGVAAEITNGSSSSVVQKYLDCANQVAPDPGN) are Extracellular-facing. The chain crosses the membrane as a helical span at residues 40–60 (TTWVLLSTILVLGMMPALAFF). The Cytoplasmic segment spans residues 61–76 (EAGLLRSKNTLSIITQ). Residues 77-97 (IMSGIVVLTVMWQAFGYSLTF) form a helical membrane-spanning segment. At 98–127 (GPDQKGIIGNLDHAFLINVSYDDCSPNAPN) the chain is on the extracellular side. The helical transmembrane segment at 128–148 (IPAAAYAFFMMMFANITPLLM) threads the bilayer. Residues 149-160 (TGAFAERVKFKA) lie on the Cytoplasmic side of the membrane. The helical transmembrane segment at 161–181 (FIALTVAWEIIVFYPVAHWIW) threads the bilayer. Residues 182–194 (GGGWLHKYFGVLD) are Extracellular-facing. Residues 195–215 (FAGGIVIHTSAGVSALVIALY) form a helical membrane-spanning segment. Residues 216-233 (VGRRKDFEKYGGEFPPSN) lie on the Cytoplasmic side of the membrane. A helical membrane pass occupies residues 234–254 (LPLATIGAALLWMGWFGFNAG). Over 255 to 265 (SALAAGNIATS) the chain is Extracellular. The chain crosses the membrane as a helical span at residues 266–286 (AVASTQIGGSFSAIVWIILSA). Residues 287–293 (AKGKPNT) lie on the Cytoplasmic side of the membrane. The helical transmembrane segment at 294–314 (VSVINGVIAGLAGITPASGYI) threads the bilayer. Topologically, residues 315–316 (NS) are extracellular. The helical transmembrane segment at 317-337 (QYSIGLGICLGLASYYSVVLL) threads the bilayer. The Cytoplasmic portion of the chain corresponds to 338–351 (KHKLHIDDALDVSS). A helical membrane pass occupies residues 352–372 (VHGLTGIIGSLAIGFCAELSV). The Extracellular segment spans residues 373–392 (NPNGANGAFYGNPKLIGTQL). The helical transmembrane segment at 393–413 (LGVVSVAVWAAAWTWVLLKII) threads the bilayer. Residues 414–463 (DATIGVKIDESEEELGLDLVEHGEFAYHNISLQGNENHYSSVINSHDFFK) lie on the Cytoplasmic side of the membrane.

This sequence belongs to the ammonia transporter channel (TC 1.A.11.2) family.

It is found in the cell membrane. Its subcellular location is the endosome membrane. It localises to the lysosome membrane. The protein localises to the cytoplasmic vesicle. The protein resides in the phagosome membrane. In terms of biological role, ammonium transporter that mediates the excretion of ammonium. Controls ammonium homeostasis during growth and development. Ammonium has been shown to function as a morphogen at multiple steps during the development. This is Ammonium transporter 1 (amtA) from Dictyostelium discoideum (Social amoeba).